The primary structure comprises 174 residues: 3-hydroxydecanoyl-[acyl-carrier-protein] dehydratase (174 aa).

The active site involves His-73.

This sequence belongs to the thioester dehydratase family. FabA subfamily. In terms of assembly, homodimer.

It localises to the cytoplasm. The enzyme catalyses a (3R)-hydroxyacyl-[ACP] = a (2E)-enoyl-[ACP] + H2O. The catalysed reaction is (3R)-hydroxydecanoyl-[ACP] = (2E)-decenoyl-[ACP] + H2O. It catalyses the reaction (2E)-decenoyl-[ACP] = (3Z)-decenoyl-[ACP]. Its pathway is lipid metabolism; fatty acid biosynthesis. Functionally, necessary for the introduction of cis unsaturation into fatty acids. Catalyzes the dehydration of (3R)-3-hydroxydecanoyl-ACP to E-(2)-decenoyl-ACP and then its isomerization to Z-(3)-decenoyl-ACP. Can catalyze the dehydratase reaction for beta-hydroxyacyl-ACPs with saturated chain lengths up to 16:0, being most active on intermediate chain length. This Teredinibacter turnerae (strain ATCC 39867 / T7901) protein is 3-hydroxydecanoyl-[acyl-carrier-protein] dehydratase.